The chain runs to 389 residues: PqqA peptide cyclase (389 aa).

The Radical SAM core domain occupies valine 19–glutamate 235. Positions 33, 37, and 40 each coordinate [4Fe-4S] cluster.

Belongs to the radical SAM superfamily. PqqE family. As to quaternary structure, interacts with PqqD. The interaction is necessary for activity of PqqE. The cofactor is [4Fe-4S] cluster.

The catalysed reaction is [PQQ precursor protein] + S-adenosyl-L-methionine = E-Y cross-linked-[PQQ precursor protein] + 5'-deoxyadenosine + L-methionine + H(+). It functions in the pathway cofactor biosynthesis; pyrroloquinoline quinone biosynthesis. In terms of biological role, catalyzes the cross-linking of a glutamate residue and a tyrosine residue in the PqqA protein as part of the biosynthesis of pyrroloquinoline quinone (PQQ). This is PqqA peptide cyclase from Pseudomonas savastanoi pv. phaseolicola (strain 1448A / Race 6) (Pseudomonas syringae pv. phaseolicola (strain 1448A / Race 6)).